The chain runs to 182 residues: Large ribosomal subunit protein bL25 (182 aa).

It belongs to the bacterial ribosomal protein bL25 family. CTC subfamily. As to quaternary structure, part of the 50S ribosomal subunit; part of the 5S rRNA/L5/L18/L25 subcomplex. Contacts the 5S rRNA. Binds to the 5S rRNA independently of L5 and L18.

Functionally, this is one of the proteins that binds to the 5S RNA in the ribosome where it forms part of the central protuberance. The sequence is that of Large ribosomal subunit protein bL25 from Borrelia garinii subsp. bavariensis (strain ATCC BAA-2496 / DSM 23469 / PBi) (Borreliella bavariensis).